Here is a 328-residue protein sequence, read N- to C-terminus: Tetraacyldisaccharide 4'-kinase (328 aa).

ATP is bound at residue 55 to 62; that stretch reads TAGGNGKT.

It belongs to the LpxK family.

The catalysed reaction is a lipid A disaccharide + ATP = a lipid IVA + ADP + H(+). It participates in glycolipid biosynthesis; lipid IV(A) biosynthesis; lipid IV(A) from (3R)-3-hydroxytetradecanoyl-[acyl-carrier-protein] and UDP-N-acetyl-alpha-D-glucosamine: step 6/6. In terms of biological role, transfers the gamma-phosphate of ATP to the 4'-position of a tetraacyldisaccharide 1-phosphate intermediate (termed DS-1-P) to form tetraacyldisaccharide 1,4'-bis-phosphate (lipid IVA). The sequence is that of Tetraacyldisaccharide 4'-kinase from Escherichia coli O45:K1 (strain S88 / ExPEC).